The primary structure comprises 596 residues: MKHIRNFSIIAHIDHGKSTLSDRLIQVCGGLSDREMDAQVLDSMDLERERGITIKAQSVTLEYKAKNGEIYQLNFIDTPGHVDFSYEVSRSLAACEGALLVVDAGQGVEAQTLANCYTALDMNLDVVPILNKIDLPQADPERVAAEIEDIVGIDAMNAVRCSAKTGVGIDDVLEVIVEQIPPPEGNPDAPLQALIIDSWFDSYLGVVSLVRIKHGVLKKGDKFKVMSTGQNHTADRVGIFTPKQTDKTELKTGEVGFVIAGIKEIHGAPVGDTLTLAKNGADKPLPGFKKVKPQVYAGVFPISTDEYENFRDALNKLSLNDASLFFEPESSSALGFGFRIGYLGLLHMEIIQERLEREYDLDLITTAPTVVYEVLMTSGETIYVDNPADLPAINNIEEMREPIVEANILVPKEYLGNVITLCIEKRGTQVNMVYHGNQVAVTYHLPMAEVVMDFFDRLKSTSRGYASLEYNFIRFDPADMVRLDILINGDRVDALAMIIHRSNIRHRGLALVEKMKELIPRQMFDIAIQAAVGSQIIARSTVKALRKDVTAKCYGGDVSRKKKLLNKQKEGKKRMKQVGNVEVPQEAFLAVLKLNE.

The 183-residue stretch at 2-184 (KHIRNFSIIA…VIVEQIPPPE (183 aa)) folds into the tr-type G domain. GTP-binding positions include 14-19 (DHGKST) and 131-134 (NKID).

This sequence belongs to the TRAFAC class translation factor GTPase superfamily. Classic translation factor GTPase family. LepA subfamily.

It localises to the cell inner membrane. The enzyme catalyses GTP + H2O = GDP + phosphate + H(+). Its function is as follows. Required for accurate and efficient protein synthesis under certain stress conditions. May act as a fidelity factor of the translation reaction, by catalyzing a one-codon backward translocation of tRNAs on improperly translocated ribosomes. Back-translocation proceeds from a post-translocation (POST) complex to a pre-translocation (PRE) complex, thus giving elongation factor G a second chance to translocate the tRNAs correctly. Binds to ribosomes in a GTP-dependent manner. This Shewanella oneidensis (strain ATCC 700550 / JCM 31522 / CIP 106686 / LMG 19005 / NCIMB 14063 / MR-1) protein is Elongation factor 4.